Here is a 169-residue protein sequence, read N- to C-terminus: Large ribosomal subunit protein uL10 (169 aa).

Belongs to the universal ribosomal protein uL10 family. In terms of assembly, part of the ribosomal stalk of the 50S ribosomal subunit. The N-terminus interacts with L11 and the large rRNA to form the base of the stalk. The C-terminus forms an elongated spine to which L12 dimers bind in a sequential fashion forming a multimeric L10(L12)X complex.

Functionally, forms part of the ribosomal stalk, playing a central role in the interaction of the ribosome with GTP-bound translation factors. The sequence is that of Large ribosomal subunit protein uL10 from Rickettsia bellii (strain OSU 85-389).